We begin with the raw amino-acid sequence, 130 residues long: Small ribosomal subunit protein uS8 (130 aa).

It belongs to the universal ribosomal protein uS8 family. As to quaternary structure, part of the 30S ribosomal subunit. Contacts proteins S5 and S12.

One of the primary rRNA binding proteins, it binds directly to 16S rRNA central domain where it helps coordinate assembly of the platform of the 30S subunit. The chain is Small ribosomal subunit protein uS8 from Pectobacterium carotovorum subsp. carotovorum (strain PC1).